The following is a 581-amino-acid chain: Semenogelin-2 (581 aa).

The first 23 residues, 1–23 (MKSIILFVLSLLLILEKQAAVMG), serve as a signal peptide directing secretion. Disordered stretches follow at residues 24–62 (QKGGSKGQSPSGSSQFPHGQKGQHYFGQKDQQHTKSKGS), 132–157 (GGKAHRGTQNPSQDQGNSPSGRGISS), 173–194 (KEQASASGAQKGRTQGRSQSSY), and 271–581 (NLNQ…PIST). Polar residues-rich tracts occupy residues 138–157 (GTQNPSQDQGNSPSGRGISS) and 174–194 (EQASASGAQKGRTQGRSQSSY). The span at 291–310 (HTEERQLNHGEKSVQKDISK) shows a compositional bias: basic and acidic residues. The span at 324–333 (KSQNQVTIHS) shows a compositional bias: polar residues. Over residues 334–344 (QDQEHGHKENK) the composition is skewed to basic and acidic residues. Positions 366–396 (KSVSKGSISIQTEEQIHGKSQNQVRIPSQAQ) are enriched in polar residues. Basic and acidic residues-rich tracts occupy residues 412-425 (TEERRLNSGEKDIQ) and 455-464 (DQEHGHKENK). Composition is skewed to polar residues over residues 481 to 497 (GKNTQKDVSQSSISFQT) and 505 to 529 (SQIQTPNPNQDQWSGQNAKGKSGQS). 2 stretches are compositionally biased toward basic and acidic residues: residues 530 to 545 (ADREQDLLSHEQKGRY) and 558 to 581 (TEHEVARDDHLTQQYNEDRNPIST).

It belongs to the semenogelin family. As to quaternary structure, interacts with SERPINA5.

The protein localises to the secreted. Participates in the formation of a gel matrix (sperm coagulum) entrapping the accessory gland secretions and ejaculated spermatozoa. The chain is Semenogelin-2 (SEMG2) from Pongo abelii (Sumatran orangutan).